The sequence spans 657 residues: Sodium/glucose cotransporter 4 (657 aa).

Residues Met1–Glu24 are Extracellular-facing. Residues Ala25 to Ser45 form a helical membrane-spanning segment. The Cytoplasmic portion of the chain corresponds to Ser46–Gly79. A helical transmembrane segment spans residues Ser80–Phe100. The Extracellular segment spans residues Glu101 to Ala104. A helical membrane pass occupies residues Ala105–Val125. The Cytoplasmic segment spans residues Thr126 to Leu147. A helical membrane pass occupies residues Ser148–Ile168. Topologically, residues Gln169–Thr180 are extracellular. A helical transmembrane segment spans residues Val181–Tyr201. Residues Thr202–Thr207 lie on the Cytoplasmic side of the membrane. The helical transmembrane segment at Val208–Tyr228 threads the bilayer. The Extracellular portion of the chain corresponds to Glu229 to Thr265. The N-linked (GlcNAc...) asparagine glycan is linked to Asn246. The helical transmembrane segment at Gly266 to Cys286 threads the bilayer. Residues Thr287–Gly307 lie on the Cytoplasmic side of the membrane. A helical transmembrane segment spans residues Ser308 to Ile328. The Extracellular segment spans residues Ser329 to Arg373. Residues Gly374 to Ser396 traverse the membrane as a helical segment. Over Thr397–Met417 the chain is Cytoplasmic. A helical transmembrane segment spans residues Val418 to Ile438. Residues Gln439 to Gln451 are Extracellular-facing. A helical transmembrane segment spans residues Ala452 to Gly472. The Cytoplasmic portion of the chain corresponds to Arg473–Gly478. Residues Ala479–Val499 traverse the membrane as a helical segment. Residues Tyr500 to Tyr520 lie on the Extracellular side of the membrane. Residues Leu521–Cys541 form a helical membrane-spanning segment. The Cytoplasmic portion of the chain corresponds to Thr542–Thr636. The chain crosses the membrane as a helical span at residues Val637–Ala657.

Belongs to the sodium:solute symporter (SSF) (TC 2.A.21) family.

Its subcellular location is the membrane. Its function is as follows. Probable sodium-dependent sugar transporter. The chain is Sodium/glucose cotransporter 4 (slc5a9) from Danio rerio (Zebrafish).